A 920-amino-acid polypeptide reads, in one-letter code: Alpha-L-rhamnosidase (920 aa).

The first 19 residues, 1–19 (MCVVRTFWFAVLTVIFAVS), serve as a signal peptide directing secretion. Cysteine 20 is lipidated: N-palmitoyl cysteine. Cysteine 20 carries S-diacylglycerol cysteine lipidation. Residues aspartate 500, 504-506 (RDE), aspartate 513, and tryptophan 565 each bind alpha-L-rhamnose. Glutamate 506 serves as the catalytic Proton donor. Glutamate 779 (proton acceptor) is an active-site residue. An alpha-L-rhamnose-binding site is contributed by histidine 800.

This sequence belongs to the glycosyl hydrolase 78 family.

Its subcellular location is the cell membrane. The catalysed reaction is Hydrolysis of terminal non-reducing alpha-L-rhamnose residues in alpha-L-rhamnosides.. Functionally, alpha-L-rhamnosidase involved in ulvan degradation. Ulvan is the main polysaccharide component of the Ulvales (green seaweed) cell wall. It is composed of disaccharide building blocks comprising 3-sulfated rhamnose (Rha3S) linked to D-glucuronic acid (GlcA), L-iduronic acid (IduA), or D-xylose (Xyl). The enzyme is able to degrade p-nitrophenyl-alpha-L-rhamnopyranoside (PNP-Rha) in vitro. Incubating the enzyme with the products obtained after degradation with ulvan lyase and beta-glucuronyl hydrolase (i.e. the trisaccharides beta-alpha-L-Rha3S-IduA-Rha3S and beta-alpha-L-Rha3S-GlcA-Rha3S) showed no degradation, suggesting that the enzyme is active on neutral rhamnose and that desulfation of the oligosaccharide must be achieved before cleavage of rhamnose. The sequence is that of Alpha-L-rhamnosidase from Alteromonas sp. (strain LOR).